Here is a 405-residue protein sequence, read N- to C-terminus: Probable glucan 1,3-beta-glucosidase A (405 aa).

The first 26 residues, Met-1–Ala-26, serve as a signal peptide directing secretion. Glu-198 serves as the catalytic Proton donor. Cystine bridges form between Cys-278/Cys-403 and Cys-304/Cys-330. The active-site Nucleophile is the Glu-296.

Belongs to the glycosyl hydrolase 5 (cellulase A) family. In terms of assembly, monomer. It depends on Mn(2+) as a cofactor.

The protein localises to the secreted. It carries out the reaction Successive hydrolysis of beta-D-glucose units from the non-reducing ends of (1-&gt;3)-beta-D-glucans, releasing alpha-glucose.. Beta-glucanases participate in the metabolism of beta-glucan, the main structural component of the cell wall. It could also function biosynthetically as a transglycosylase. The polypeptide is Probable glucan 1,3-beta-glucosidase A (exgA) (Emericella nidulans (strain FGSC A4 / ATCC 38163 / CBS 112.46 / NRRL 194 / M139) (Aspergillus nidulans)).